The chain runs to 325 residues: Replication factor C small subunit (325 aa).

Residue 45-52 (GPPGTGKT) coordinates ATP.

It belongs to the activator 1 small subunits family. RfcS subfamily. In terms of assembly, heteromultimer composed of small subunits (RfcS) and large subunits (RfcL).

Part of the RFC clamp loader complex which loads the PCNA sliding clamp onto DNA. This is Replication factor C small subunit from Sulfolobus acidocaldarius (strain ATCC 33909 / DSM 639 / JCM 8929 / NBRC 15157 / NCIMB 11770).